The sequence spans 70 residues: Neuropeptide SIFamide (70 aa).

A signal peptide spans 1-22 (MRFIVALCLFAIVMCIIHKAEG). Phe34 carries the post-translational modification Phenylalanine amide. Positions 38–70 (GVVEYDTTGRALSALCEIASETCQAWYQTLENK) are excised as a propeptide.

Expressed in antennal lobe (AL) and gnathal ganglion (GNG) with expression detected in most animals (at protein level). Not expressed in corpora cardiaca (CC) and corpora allata (CA) (at protein level).

Its subcellular location is the secreted. In terms of biological role, ligand for the neuropeptide SIFamide receptor. The chain is Neuropeptide SIFamide from Agrotis ipsilon (Black cutworm moth).